The following is a 609-amino-acid chain: UvrABC system protein C (609 aa).

One can recognise a GIY-YIG domain in the interval 15 to 92 (TGSGVYQMQD…IKQFRPRYNV (78 aa)). In terms of domain architecture, UVR spans 202–237 (DQVIIKLTERMEVASENLVFEEAAHYRDQIRQLRRL).

The protein belongs to the UvrC family. As to quaternary structure, interacts with UvrB in an incision complex.

It is found in the cytoplasm. In terms of biological role, the UvrABC repair system catalyzes the recognition and processing of DNA lesions. UvrC both incises the 5' and 3' sides of the lesion. The N-terminal half is responsible for the 3' incision and the C-terminal half is responsible for the 5' incision. The protein is UvrABC system protein C of Coxiella burnetii (strain CbuK_Q154) (Coxiella burnetii (strain Q154)).